A 248-amino-acid polypeptide reads, in one-letter code: Ribonuclease PH (248 aa).

Phosphate contacts are provided by residues arginine 86 and 124-126; that span reads GTR.

The protein belongs to the RNase PH family. In terms of assembly, homohexameric ring arranged as a trimer of dimers.

The enzyme catalyses tRNA(n+1) + phosphate = tRNA(n) + a ribonucleoside 5'-diphosphate. Functionally, phosphorolytic 3'-5' exoribonuclease that plays an important role in tRNA 3'-end maturation. Removes nucleotide residues following the 3'-CCA terminus of tRNAs; can also add nucleotides to the ends of RNA molecules by using nucleoside diphosphates as substrates, but this may not be physiologically important. Probably plays a role in initiation of 16S rRNA degradation (leading to ribosome degradation) during starvation. The chain is Ribonuclease PH from Clostridium kluyveri (strain NBRC 12016).